The primary structure comprises 398 residues: Glycosyltransferase GlyF (398 aa).

The segment at 1 to 259 is GT8 domain; sequence MRKSIVLAAD…SEIAFQRSDL (259 aa). UDP is bound by residues 8 to 13 and 101 to 102; these read AADNAY and DS. Mn(2+) is bound by residues Asp101, Asp103, and His221. Position 221–227 (221–227) interacts with UDP; that stretch reads HYASHDK.

It in the N-terminal section; belongs to the glycosyltransferase 8 family.

Its function is as follows. May be involved in the polymorphic O-glycosylation of the serine-rich repeat protein PsrP. Has hydrolytic activity against UDP-galactose and to a lesser extent against UDP-glucose; no glycosyltransferase activity has been seen with tested substrates. In Streptococcus pneumoniae serotype 4 (strain ATCC BAA-334 / TIGR4), this protein is Glycosyltransferase GlyF.